A 486-amino-acid polypeptide reads, in one-letter code: Bifunctional protein HldE (486 aa).

The tract at residues 1–331 is ribokinase; that stretch reads MAEHDDGDLI…VDAVKPASGA (331 aa). 208-211 serves as a coordination point for ATP; that stretch reads NRRE. The active site involves Asp277. Positions 357 to 486 are cytidylyltransferase; it reads FTNGCFDLLH…TTATVTRLRS (130 aa).

The protein in the N-terminal section; belongs to the carbohydrate kinase PfkB family. It in the C-terminal section; belongs to the cytidylyltransferase family. Homodimer.

The enzyme catalyses D-glycero-beta-D-manno-heptose 7-phosphate + ATP = D-glycero-beta-D-manno-heptose 1,7-bisphosphate + ADP + H(+). The catalysed reaction is D-glycero-beta-D-manno-heptose 1-phosphate + ATP + H(+) = ADP-D-glycero-beta-D-manno-heptose + diphosphate. Its pathway is nucleotide-sugar biosynthesis; ADP-L-glycero-beta-D-manno-heptose biosynthesis; ADP-L-glycero-beta-D-manno-heptose from D-glycero-beta-D-manno-heptose 7-phosphate: step 1/4. It functions in the pathway nucleotide-sugar biosynthesis; ADP-L-glycero-beta-D-manno-heptose biosynthesis; ADP-L-glycero-beta-D-manno-heptose from D-glycero-beta-D-manno-heptose 7-phosphate: step 3/4. Catalyzes the phosphorylation of D-glycero-D-manno-heptose 7-phosphate at the C-1 position to selectively form D-glycero-beta-D-manno-heptose-1,7-bisphosphate. Functionally, catalyzes the ADP transfer from ATP to D-glycero-beta-D-manno-heptose 1-phosphate, yielding ADP-D-glycero-beta-D-manno-heptose. This Acidiphilium cryptum (strain JF-5) protein is Bifunctional protein HldE.